Consider the following 212-residue polypeptide: Ribonuclease HII (212 aa).

The RNase H type-2 domain maps to 1-206; it reads MARFGVDEAG…SRDALGAAEQ (206 aa). A divalent metal cation contacts are provided by D7, E8, and D100.

It belongs to the RNase HII family. It depends on Mn(2+) as a cofactor. Mg(2+) serves as cofactor.

It is found in the cytoplasm. It catalyses the reaction Endonucleolytic cleavage to 5'-phosphomonoester.. Its function is as follows. Endonuclease that specifically degrades the RNA of RNA-DNA hybrids. The sequence is that of Ribonuclease HII from Halobacterium salinarum (strain ATCC 29341 / DSM 671 / R1).